A 128-amino-acid polypeptide reads, in one-letter code: Large ribosomal subunit protein bL17 (128 aa).

The protein belongs to the bacterial ribosomal protein bL17 family. As to quaternary structure, part of the 50S ribosomal subunit. Contacts protein L32.

The protein is Large ribosomal subunit protein bL17 of Erwinia tasmaniensis (strain DSM 17950 / CFBP 7177 / CIP 109463 / NCPPB 4357 / Et1/99).